The following is a 208-amino-acid chain: N-(5'-phosphoribosyl)anthranilate isomerase (208 aa).

This sequence belongs to the TrpF family.

The catalysed reaction is N-(5-phospho-beta-D-ribosyl)anthranilate = 1-(2-carboxyphenylamino)-1-deoxy-D-ribulose 5-phosphate. Its pathway is amino-acid biosynthesis; L-tryptophan biosynthesis; L-tryptophan from chorismate: step 3/5. In Neisseria meningitidis serogroup A / serotype 4A (strain DSM 15465 / Z2491), this protein is N-(5'-phosphoribosyl)anthranilate isomerase.